A 98-amino-acid polypeptide reads, in one-letter code: Small ribosomal subunit protein bS6 (98 aa).

It belongs to the bacterial ribosomal protein bS6 family.

Binds together with bS18 to 16S ribosomal RNA. The sequence is that of Small ribosomal subunit protein bS6 from Lacticaseibacillus paracasei (strain ATCC 334 / BCRC 17002 / CCUG 31169 / CIP 107868 / KCTC 3260 / NRRL B-441) (Lactobacillus paracasei).